The sequence spans 141 residues: Hemoglobin subunit alpha (141 aa).

The Globin domain maps to 1 to 141; that stretch reads VLSPADKTNV…VSTVLTSKYR (141 aa). Residue Ser-3 is modified to Phosphoserine. Lys-7 is subject to N6-succinyllysine. Residue Thr-8 is modified to Phosphothreonine. Lys-11 is modified (N6-succinyllysine). An N6-acetyllysine; alternate modification is found at Lys-16. Lys-16 is subject to N6-succinyllysine; alternate. Tyr-24 is modified (phosphotyrosine). A Phosphoserine modification is found at Ser-35. The residue at position 40 (Lys-40) is an N6-succinyllysine. A Phosphoserine modification is found at Ser-49. His-58 provides a ligand contact to O2. His-87 serves as a coordination point for heme b. At Ser-102 the chain carries Phosphoserine. Thr-108 carries the phosphothreonine modification. Phosphoserine is present on residues Ser-124 and Ser-131. Residues Thr-134 and Thr-137 each carry the phosphothreonine modification. Phosphoserine is present on Ser-138.

It belongs to the globin family. In terms of assembly, heterotetramer of two alpha chains and two beta chains. Red blood cells.

Its function is as follows. Involved in oxygen transport from the lung to the various peripheral tissues. In terms of biological role, hemopressin acts as an antagonist peptide of the cannabinoid receptor CNR1. Hemopressin-binding efficiently blocks cannabinoid receptor CNR1 and subsequent signaling. The chain is Hemoglobin subunit alpha (HBA) from Urocitellus parryii (Arctic ground squirrel).